The following is a 430-amino-acid chain: Asparagine--tRNA ligase (430 aa).

This sequence belongs to the class-II aminoacyl-tRNA synthetase family. Homodimer.

It localises to the cytoplasm. It catalyses the reaction tRNA(Asn) + L-asparagine + ATP = L-asparaginyl-tRNA(Asn) + AMP + diphosphate + H(+). In Shouchella clausii (strain KSM-K16) (Alkalihalobacillus clausii), this protein is Asparagine--tRNA ligase.